A 406-amino-acid chain; its full sequence is 3-oxoacyl-[acyl-carrier-protein] synthase 1 (406 aa).

The Ketosynthase family 3 (KS3) domain maps to 1 to 403 (MKRAVITGLG…GTNATLVMRK (403 aa)). Active-site for beta-ketoacyl synthase activity residues include C163, H298, and H333.

The protein belongs to the thiolase-like superfamily. Beta-ketoacyl-ACP synthases family. In terms of assembly, homodimer.

The protein resides in the cytoplasm. The catalysed reaction is a fatty acyl-[ACP] + malonyl-[ACP] + H(+) = a 3-oxoacyl-[ACP] + holo-[ACP] + CO2. The enzyme catalyses (3Z)-decenoyl-[ACP] + malonyl-[ACP] + H(+) = 3-oxo-(5Z)-dodecenoyl-[ACP] + holo-[ACP] + CO2. The protein operates within lipid metabolism; fatty acid biosynthesis. Functionally, involved in the type II fatty acid elongation cycle. Catalyzes the elongation of a wide range of acyl-ACP by the addition of two carbons from malonyl-ACP to an acyl acceptor. Can also use unsaturated fatty acids. Catalyzes a key reaction in unsaturated fatty acid (UFA) synthesis, the elongation of the cis-3-decenoyl-ACP produced by FabA. The chain is 3-oxoacyl-[acyl-carrier-protein] synthase 1 (fabB) from Escherichia coli O6:H1 (strain CFT073 / ATCC 700928 / UPEC).